Here is a 454-residue protein sequence, read N- to C-terminus: tRNA modification GTPase MnmE (454 aa).

Residues Arg23, Glu80, and Lys120 each contribute to the (6S)-5-formyl-5,6,7,8-tetrahydrofolate site. The 162-residue stretch at 216–377 (GMKVVIAGRP…LRDHLKQSMG (162 aa)) folds into the TrmE-type G domain. Asn226 is a K(+) binding site. GTP contacts are provided by residues 226–231 (NAGKSS), 245–251 (TDIAGTT), 270–273 (DTAG), 335–338 (NKAD), and 358–360 (SAR). A Mg(2+)-binding site is contributed by Ser230. K(+) contacts are provided by Thr245, Ile247, and Thr250. Position 251 (Thr251) interacts with Mg(2+). Lys454 serves as a coordination point for (6S)-5-formyl-5,6,7,8-tetrahydrofolate.

This sequence belongs to the TRAFAC class TrmE-Era-EngA-EngB-Septin-like GTPase superfamily. TrmE GTPase family. Homodimer. Heterotetramer of two MnmE and two MnmG subunits. It depends on K(+) as a cofactor.

Its subcellular location is the cytoplasm. Functionally, exhibits a very high intrinsic GTPase hydrolysis rate. Involved in the addition of a carboxymethylaminomethyl (cmnm) group at the wobble position (U34) of certain tRNAs, forming tRNA-cmnm(5)s(2)U34. This chain is tRNA modification GTPase MnmE, found in Yersinia pseudotuberculosis serotype O:1b (strain IP 31758).